The primary structure comprises 1193 residues: MALVQTHGSRGLHPEASDPGRQPSRRRSRQSSPGAVPEPARARRRRAPATTASGSRAAPTARRASSPPLLTMEAKPLPPAKKKRGTVVTPQGHGTLQAIDVATNGAVEIKYHLDLPRALEKLLQVNRAPPLPTDLTPQRLRTLDSSGLRALVLALRPVRAEVWTCLPRGLVSMTTIEAEEGQADHHDVVQHQMQAPRLHFPLKFLVKGTQVQLVQHVHPVQRCEHCGRLYKHKHECSARRRHFYFHHINSHSSNWWQEIQFFPIGSHPRTERLFLTYDVETYTWMGSFGKQLVPFMLVMKLSGDDRLVELALDLALQLKWDRWHGDPRTFYCVTPEKMAVGQQFRQYRDRLQTALAVDLWTSFLRANPHLADWALEQHGLSDPDELTYEELKKLPHVKGRPRFVELYIVGHNINGFDEIVLAAQVINNRAEVPQPFRITRNFMPRAGKILFNDVTFALPNPAYKKRTDFQLWEQGGCDDIDFKHQFLKVMVRDTFALTHTSLRKAAQAYALPVEKGCCAYKAVNQFYMLGSYRADQDGFPLEEYWKDREEFLLNRELWKQKGQLKYDIIQETLDYCALDVLVTAELVAKLQDSYAHFIRDSVGLPHAHFNIFQRPTISSNSHAIFRQIVYRAEKPSRANLGAGLLAPSHELYDYVRATIRGGRCYPTYIGILDEPLYVYDICGMYASALTHPMPWGTPLSPYERALAVREWQASLDDLGTCISYFDPDLLPGIFTIDADPPDELMLDPLPPFCSRKGGRLCWTNEPLRGEVATSVDLITLHNRGWQVRIVPDELTTVFPEWKCVAREYVQLNIAAKERADKEKNQTMRSIAKLLSNALYGSFATKLDNKKIVFSDQMDEGLLKGISAGTVNIKSSSFLETDNLSAEVMPAFEREYLPQHVALLDSDPEDSEDEQRPAPFYTPPAGTPGHVAYTYKPITFLDVDEGDMCLHTLEKVDPLVDNDRYPSHVASFVLAWTRAFVSEWSGFLYDEDRGVPLEDRPIKSVYGDTDSLFVTQRGHELMETRGKKRIKKNGGKLVFDPNQPDLTWLVECETVCAHCGADAYAPESVFLAPKLYALKSLLCPACGQTSKGNVRAKGHAAEALNYELMVNCYLADAQGADRERFSTSRMSLKRTLASAQPGAHPFTVTETTLTRTLRPWKDRTLAALDAHRLAPYSRSRPNPRNEEVCWIEMP.

The tract at residues 1–88 is disordered; that stretch reads MALVQTHGSR…PAKKKRGTVV (88 aa). Low complexity predominate over residues 48–68; that stretch reads PATTASGSRAAPTARRASSPP.

The protein belongs to the DNA polymerase type-B family. In terms of assembly, heterodimer with the terminal protein; this heterodimer binds to bp 9 to 18 of the genome. Forms a complex with viral pTP, DBP and hosts NFIA and POU2F1/OCT1 for initiation of replication.

It localises to the host nucleus. The catalysed reaction is DNA(n) + a 2'-deoxyribonucleoside 5'-triphosphate = DNA(n+1) + diphosphate. In terms of biological role, eukaryotic-type DNA polymerase involved in viral genomic replication. DNA synthesis is protein primed, and acts in a strand displacement replication. Assembles in complex with viral pTP, DBP, host NFIA and host POU2F1/OCT1 on viral origin of replication. The polymerase covalently transfers dCMP onto pTP, thereby initiating complementary strand synthesis. The polypeptide is DNA polymerase (Homo sapiens (Human)).